The following is a 112-amino-acid chain: Mediator of RNA polymerase II transcription subunit 22 (112 aa).

A disordered region spans residues 83 to 112 (KPEDGGEGQLADELLDKIEDTSDGVDKETA). Positions 96–112 (LLDKIEDTSDGVDKETA) are enriched in basic and acidic residues.

It belongs to the Mediator complex subunit 22 family. Component of the Mediator complex.

It is found in the nucleus. In terms of biological role, component of the Mediator complex, a coactivator involved in the regulated transcription of nearly all RNA polymerase II-dependent genes. Mediator functions as a bridge to convey information from gene-specific regulatory proteins to the basal RNA polymerase II transcription machinery. Mediator is recruited to promoters by direct interactions with regulatory proteins and serves as a scaffold for the assembly of a functional preinitiation complex with RNA polymerase II and the general transcription factors. The chain is Mediator of RNA polymerase II transcription subunit 22 (SRB6) from Yarrowia lipolytica (strain CLIB 122 / E 150) (Yeast).